A 968-amino-acid polypeptide reads, in one-letter code: RNA polymerase-associated protein RapA (968 aa).

Positions 164–334 (DVGRRHAPRV…FARLRLLDPN (171 aa)) constitute a Helicase ATP-binding domain. 177 to 184 (DEVGLGKT) contributes to the ATP binding site. Residues 280-283 (DEAH) carry the DEAH box motif. Positions 490 to 685 (RVEWLMGYLT…ALKAQLEQGR (196 aa)) constitute a Helicase C-terminal domain.

This sequence belongs to the SNF2/RAD54 helicase family. RapA subfamily. In terms of assembly, interacts with the RNAP. Has a higher affinity for the core RNAP than for the holoenzyme. Its ATPase activity is stimulated by binding to RNAP.

In terms of biological role, transcription regulator that activates transcription by stimulating RNA polymerase (RNAP) recycling in case of stress conditions such as supercoiled DNA or high salt concentrations. Probably acts by releasing the RNAP, when it is trapped or immobilized on tightly supercoiled DNA. Does not activate transcription on linear DNA. Probably not involved in DNA repair. The protein is RNA polymerase-associated protein RapA of Salmonella newport (strain SL254).